The following is a 317-amino-acid chain: Putative pyridoxal kinase BUD17 (317 aa).

Positions 16 and 128 each coordinate substrate. ATP is bound by residues 190-191 and 220-232; these read TS and EIPK…SGSG. Aspartate 233 is a substrate binding site.

This sequence belongs to the pyridoxine kinase family. Requires a divalent metal cation as cofactor.

The protein resides in the cytoplasm. It is found in the nucleus. The catalysed reaction is pyridoxal + ATP = pyridoxal 5'-phosphate + ADP + H(+). Functionally, required for synthesis of pyridoxal-5-phosphate from vitamin B6. Important for bud site selection. This is Putative pyridoxal kinase BUD17 (BUD17) from Saccharomyces cerevisiae (strain ATCC 204508 / S288c) (Baker's yeast).